The following is a 150-amino-acid chain: Protein-export protein SecB (150 aa).

It belongs to the SecB family. Homotetramer, a dimer of dimers. One homotetramer interacts with 1 SecA dimer.

Its subcellular location is the cytoplasm. Functionally, one of the proteins required for the normal export of preproteins out of the cell cytoplasm. It is a molecular chaperone that binds to a subset of precursor proteins, maintaining them in a translocation-competent state. It also specifically binds to its receptor SecA. This chain is Protein-export protein SecB, found in Psychrobacter cryohalolentis (strain ATCC BAA-1226 / DSM 17306 / VKM B-2378 / K5).